Consider the following 330-residue polypeptide: Methylthioribose-1-phosphate isomerase (330 aa).

Substrate contacts are provided by residues 49–51, Arg83, and Gln179; that span reads RGA. The Proton donor role is filled by Asp220. 230–231 serves as a coordination point for substrate; that stretch reads NK.

This sequence belongs to the eIF-2B alpha/beta/delta subunits family. MtnA subfamily.

It carries out the reaction 5-(methylsulfanyl)-alpha-D-ribose 1-phosphate = 5-(methylsulfanyl)-D-ribulose 1-phosphate. Its pathway is amino-acid biosynthesis; L-methionine biosynthesis via salvage pathway; L-methionine from S-methyl-5-thio-alpha-D-ribose 1-phosphate: step 1/6. Its function is as follows. Catalyzes the interconversion of methylthioribose-1-phosphate (MTR-1-P) into methylthioribulose-1-phosphate (MTRu-1-P). This chain is Methylthioribose-1-phosphate isomerase, found in Thermus thermophilus (strain ATCC BAA-163 / DSM 7039 / HB27).